Consider the following 392-residue polypeptide: Phosphoglycerate kinase (392 aa).

Substrate contacts are provided by residues Asp21–Asn23, Arg36, His59–Arg62, Arg113, and Arg146. Residues Lys197, Glu319, and Gly345 to Thr348 each bind ATP.

The protein belongs to the phosphoglycerate kinase family. As to quaternary structure, monomer.

Its subcellular location is the cytoplasm. The enzyme catalyses (2R)-3-phosphoglycerate + ATP = (2R)-3-phospho-glyceroyl phosphate + ADP. It participates in carbohydrate degradation; glycolysis; pyruvate from D-glyceraldehyde 3-phosphate: step 2/5. This Francisella tularensis subsp. tularensis (strain FSC 198) protein is Phosphoglycerate kinase.